A 210-amino-acid polypeptide reads, in one-letter code: dTTP/UTP pyrophosphatase (210 aa).

A compositionally biased stretch (basic and acidic residues) spans 1-15 (MTHGDNRDGPGRETR). A disordered region spans residues 1–22 (MTHGDNRDGPGRETRSSGPLVL). Catalysis depends on Asp-86, which acts as the Proton acceptor.

This sequence belongs to the Maf family. YhdE subfamily. It depends on a divalent metal cation as a cofactor.

It localises to the cytoplasm. It catalyses the reaction dTTP + H2O = dTMP + diphosphate + H(+). It carries out the reaction UTP + H2O = UMP + diphosphate + H(+). Functionally, nucleoside triphosphate pyrophosphatase that hydrolyzes dTTP and UTP. May have a dual role in cell division arrest and in preventing the incorporation of modified nucleotides into cellular nucleic acids. This is dTTP/UTP pyrophosphatase from Rhodospirillum rubrum (strain ATCC 11170 / ATH 1.1.1 / DSM 467 / LMG 4362 / NCIMB 8255 / S1).